The following is a 653-amino-acid chain: 4-hydroxy-2,2'-bipyrrole-5-methanol synthase PigH (653 aa).

One can recognise a Carrier domain in the interval 7–84; that stretch reads ETYETLKQSV…DALDGILQRE (78 aa). Position 45 is an O-(pantetheine 4'-phosphoryl)serine (S45). 354 to 355 contributes to the pyridoxal 5'-phosphate binding site; that stretch reads GY. H379 contributes to the substrate binding site. Pyridoxal 5'-phosphate is bound by residues S426, H454, and T482. K485 bears the N6-(pyridoxal phosphate)lysine mark. A helical transmembrane segment spans residues 512 to 532; sequence VFAATIPAPVAAGVIASIDVM.

Requires pyridoxal 5'-phosphate as cofactor.

The protein resides in the membrane. Its pathway is antibiotic biosynthesis; prodigiosin biosynthesis. In terms of biological role, involved in the biosynthesis of 4-methoxy-2,2'-bipyrrole-5-carbaldehyde (MBC), one of the terminal products involved in the biosynthesis of the red antibiotic prodigiosin (Pig). Carrier of the L-malonyl group (malonyl-S-PigH), which is decarboxylated by PigJ to yield a C2 carbanion acetyl-S-PigH. Then the pyrrolyl group of pyrrolyl-S-cysteinyl PigJ intermediate is captured by the C2 carbanion acetyl-S-PigH to yield the pyrrolyl-beta-ketoacyl-S-PigH. In the last step, PigH catalyzes the decarboxylative condensation between the pyrrolyl-beta-ketoacyl (pyrrolyl-beta-ketoacyl-S-PigH) and L-serine to yield 4-hydroxy-2,2'-bipyrrole-5-methanol (HBM). The chain is 4-hydroxy-2,2'-bipyrrole-5-methanol synthase PigH from Serratia sp. (strain ATCC 39006) (Prodigiosinella confusarubida).